A 466-amino-acid chain; its full sequence is Chromosomal replication initiator protein DnaA (466 aa).

Residues 1-85 are domain I, interacts with DnaA modulators; it reads MSLSLWQHCL…FEVGNKPVSA (85 aa). The interval 82 to 122 is disordered; that stretch reads PVSARTTESVPKTVTHPAVNSTPTNSQPVRPSWDNQPQSQL. Residues 85–122 show a composition bias toward polar residues; it reads ARTTESVPKTVTHPAVNSTPTNSQPVRPSWDNQPQSQL. A domain II region spans residues 85–129; sequence ARTTESVPKTVTHPAVNSTPTNSQPVRPSWDNQPQSQLPELNYRS. The segment at 130–346 is domain III, AAA+ region; the sequence is NVNPKHKFDN…GALNRVIANA (217 aa). Gly174, Gly176, Lys177, and Thr178 together coordinate ATP. The domain IV, binds dsDNA stretch occupies residues 347–466; that stretch reads NFTGRAITID…FSNLIRTLSS (120 aa).

It belongs to the DnaA family. As to quaternary structure, oligomerizes as a right-handed, spiral filament on DNA at oriC.

It is found in the cytoplasm. Functionally, plays an essential role in the initiation and regulation of chromosomal replication. ATP-DnaA binds to the origin of replication (oriC) to initiate formation of the DNA replication initiation complex once per cell cycle. Binds the DnaA box (a 9 base pair repeat at the origin) and separates the double-stranded (ds)DNA. Forms a right-handed helical filament on oriC DNA; dsDNA binds to the exterior of the filament while single-stranded (ss)DNA is stabiized in the filament's interior. The ATP-DnaA-oriC complex binds and stabilizes one strand of the AT-rich DNA unwinding element (DUE), permitting loading of DNA polymerase. After initiation quickly degrades to an ADP-DnaA complex that is not apt for DNA replication. Binds acidic phospholipids. This chain is Chromosomal replication initiator protein DnaA, found in Proteus mirabilis (strain HI4320).